The following is a 151-amino-acid chain: Ribosome maturation factor RimP (151 aa).

The protein belongs to the RimP family.

The protein localises to the cytoplasm. Functionally, required for maturation of 30S ribosomal subunits. The protein is Ribosome maturation factor RimP of Vibrio atlanticus (strain LGP32) (Vibrio splendidus (strain Mel32)).